Consider the following 605-residue polypeptide: MGKYYQIFFLLYLLCILYVISCGYINPYSPYSSPCLFAPIIGYLYMGGSLSSNSSNNNNNNNNNNNNNNNNNNNNNNNNNNKDSKLTENCNNNSSNNNSDNKSNIKNKQHHHHSNFRNRRGKSNNKNSSDNDDCTKCNKRHHTQSSSYDTSELHQSVSSGLGGSMGSGSQALTDIEKDINEFMNANPSHSLNKQQIQQQQQLQQQQQQLLKQQQQQQQQQQQQQQQQQQQQLEKQRKEQEETEKKKQLELQQQQQLQQQQQNGNGLIIEEDMMEGRILRNISKVYRDVNENQPKSYYDYEGYRINWKNVDRYEVIQKIGRGKYSEVFSGIDIETSDEVVIKVLKPVQKLKIQREIKILESLNGGPNIIPLLDSVKDQSSKVCSLVFPFVNKTDIRELVYTLDDYDIRYYIFELLKAIDYTHSKGIIHRDIKPLNIAIDHSKRKLSLIDWGLAEYYHPGKNYNVRVASRHYKPPELLVNMFDYDYSLDMWSLGCLFAGLILDRDPFFNGDNNNDQLLKIVKVLGTDDLFNFLDKFGLSLTDEQSSLIKPRQKSNWERFIPYENDDIAQPDAIDFLDKLLRYDPTERLTAKEAMKHPYFKDFNQSIL.

A helical transmembrane segment spans residues 5 to 25 (YQIFFLLYLLCILYVISCGYI). N-linked (GlcNAc...) asparagine glycosylation is present at N53. 2 stretches are compositionally biased toward low complexity: residues 54–81 (SSNNNNNNNNNNNNNNNNNNNNNNNNNN) and 89–104 (NCNNNSSNNNSDNKSN). The interval 54-170 (SSNNNNNNNN…LGGSMGSGSQ (117 aa)) is disordered. N-linked (GlcNAc...) asparagine glycosylation is found at N92, N93, N97, and N101. The segment covering 105-123 (IKNKQHHHHSNFRNRRGKS) has biased composition (basic residues). N-linked (GlcNAc...) asparagine glycosylation occurs at N127. A compositionally biased stretch (polar residues) spans 144–155 (QSSSYDTSELHQ). An N-linked (GlcNAc...) asparagine glycan is attached at N280. Positions 312–597 (YEVIQKIGRG…AKEAMKHPYF (286 aa)) constitute a Protein kinase domain. Residues 318 to 326 (IGRGKYSEV) and K341 contribute to the ATP site. The N-linked (GlcNAc...) asparagine glycan is linked to N390. D429 (proton acceptor) is an active-site residue. N601 carries N-linked (GlcNAc...) asparagine glycosylation.

This sequence belongs to the protein kinase superfamily. CMGC Ser/Thr protein kinase family.

The protein localises to the membrane. It carries out the reaction L-seryl-[protein] + ATP = O-phospho-L-seryl-[protein] + ADP + H(+). The enzyme catalyses L-threonyl-[protein] + ATP = O-phospho-L-threonyl-[protein] + ADP + H(+). In Dictyostelium discoideum (Social amoeba), this protein is Probable serine/threonine-protein kinase DDB_G0286481.